A 445-amino-acid chain; its full sequence is C-type lectin domain family 4 member M (445 aa).

Topologically, residues M1–G49 are cytoplasmic. An Endocytosis signal motif is present at residues L14–L15. A helical; Signal-anchor for type II membrane protein transmembrane segment spans residues P50–V70. Residues Q71 to E445 are Extracellular-facing. The N-linked (GlcNAc...) asparagine glycan is linked to N92. 9 repeat units span residues K108–S130, K131–E151, K154–S176, K177–S199, K200–S222, K223–S245, K246–S268, E269–S291, and K292–C314. Residues K108 to P315 are 9 X approximate tandem repeats. Intrachain disulfides connect C311–C441, C314–C325, C342–C435, and C414–C427. Positions F320–K436 constitute a C-type lectin domain. E405, N407, S409, E412, N423, and D424 together coordinate Ca(2+). Residue N407 is glycosylated (N-linked (GlcNAc...) asparagine).

Homotetramer.

The protein localises to the membrane. In terms of biological role, probable pathogen-recognition receptor involved in peripheral immune surveillance in liver. May mediate the endocytosis of pathogens which are subsequently degraded in lysosomal compartments. Probably recognizes in a calcium-dependent manner high mannose N-linked oligosaccharides in a variety of pathogen antigens. Is a receptor for ICAM3, probably by binding to mannose-like carbohydrates. The polypeptide is C-type lectin domain family 4 member M (CLEC4M) (Pan troglodytes (Chimpanzee)).